The sequence spans 60 residues: UPF0291 protein Nther_1806 (60 aa).

Belongs to the UPF0291 family.

It localises to the cytoplasm. The sequence is that of UPF0291 protein Nther_1806 from Natranaerobius thermophilus (strain ATCC BAA-1301 / DSM 18059 / JW/NM-WN-LF).